The sequence spans 728 residues: Rho-related BTB domain-containing protein 2 (728 aa).

Positions 1–210 (MDSDMDYERP…DNAIRAALIS (210 aa)) are rho-like. Residues 21 to 28 (GDNAVGKT), 84 to 88 (DTFGD), and 140 to 143 (CQLD) each bind GTP. BTB domains lie at 266-333 (ADVI…HHHH) and 500-567 (SDVT…TSSP). Positions 304 to 313 (ELGGPSGSGG) are enriched in gly residues. The tract at residues 304 to 333 (ELGGPSGSGGPRPEDHRSHPEQHHHHHHHH) is disordered. Positions 315–324 (RPEDHRSHPE) are enriched in basic and acidic residues. The segment at 703–728 (FWNSPSSPSSSAAGSASPSSSSSAVV) is disordered. The span at 706–728 (SPSSPSSSAAGSASPSSSSSAVV) shows a compositional bias: low complexity.

The protein belongs to the small GTPase superfamily. Rho family. Interacts with HSP90AA1 and HSP90AB1. Forms a complex with CUL3 and RBX1. Interacts (via BTB 1 domain) with CUL3. Interacts with MSI2. Autoubiquitinated by RHOBTB2-CUL3-RBX1 ubiquitin ligase complex. In terms of tissue distribution, expressed in most tissues, with highest expression in brain.

Functionally, regulator of cell proliferation and apoptosis. It likely functions as a substrate-adapter that recruits key substrates, e.g. MSI2, to CUL3-based ubiquitin ligase complexes for degradation. Required for MSI2 ubiquitination and degradation. The chain is Rho-related BTB domain-containing protein 2 (Rhobtb2) from Mus musculus (Mouse).